The chain runs to 81 residues: ATP synthase subunit c, chloroplastic (81 aa).

2 consecutive transmembrane segments (helical) span residues 7 to 27 and 57 to 77; these read AASVIAAGLAVGLASIGPGIG and LAFMEALTIYGLVVALALLFA.

The protein belongs to the ATPase C chain family. In terms of assembly, F-type ATPases have 2 components, F(1) - the catalytic core - and F(0) - the membrane proton channel. F(1) has five subunits: alpha(3), beta(3), gamma(1), delta(1), epsilon(1). F(0) has four main subunits: a(1), b(1), b'(1) and c(10-14). The alpha and beta chains form an alternating ring which encloses part of the gamma chain. F(1) is attached to F(0) by a central stalk formed by the gamma and epsilon chains, while a peripheral stalk is formed by the delta, b and b' chains.

The protein localises to the plastid. The protein resides in the chloroplast thylakoid membrane. Functionally, f(1)F(0) ATP synthase produces ATP from ADP in the presence of a proton or sodium gradient. F-type ATPases consist of two structural domains, F(1) containing the extramembraneous catalytic core and F(0) containing the membrane proton channel, linked together by a central stalk and a peripheral stalk. During catalysis, ATP synthesis in the catalytic domain of F(1) is coupled via a rotary mechanism of the central stalk subunits to proton translocation. Its function is as follows. Key component of the F(0) channel; it plays a direct role in translocation across the membrane. A homomeric c-ring of between 10-14 subunits forms the central stalk rotor element with the F(1) delta and epsilon subunits. The protein is ATP synthase subunit c, chloroplastic of Pelargonium hortorum (Common geranium).